Here is a 450-residue protein sequence, read N- to C-terminus: Tubulin beta chain (450 aa).

Residues Glu69, Ser138, Gly142, Thr143, Gly144, Asn204, and Asn226 each coordinate GTP. Glu69 provides a ligand contact to Mg(2+). The interval 427–450 is disordered; that stretch reads DATIDQEFEDEEEVEEQNDDSDEQ. The segment covering 430–450 has biased composition (acidic residues); that stretch reads IDQEFEDEEEVEEQNDDSDEQ.

It belongs to the tubulin family. As to quaternary structure, dimer of alpha and beta chains. A typical microtubule is a hollow water-filled tube with an outer diameter of 25 nm and an inner diameter of 15 nM. Alpha-beta heterodimers associate head-to-tail to form protofilaments running lengthwise along the microtubule wall with the beta-tubulin subunit facing the microtubule plus end conferring a structural polarity. Microtubules usually have 13 protofilaments but different protofilament numbers can be found in some organisms and specialized cells. The cofactor is Mg(2+).

The protein resides in the cytoplasm. It localises to the cytoskeleton. Its function is as follows. Tubulin is the major constituent of microtubules, a cylinder consisting of laterally associated linear protofilaments composed of alpha- and beta-tubulin heterodimers. Microtubules grow by the addition of GTP-tubulin dimers to the microtubule end, where a stabilizing cap forms. Below the cap, tubulin dimers are in GDP-bound state, owing to GTPase activity of alpha-tubulin. The protein is Tubulin beta chain of Bombyx mori (Silk moth).